We begin with the raw amino-acid sequence, 343 residues long: L-threonine 3-dehydrogenase (343 aa).

C38 is a binding site for Zn(2+). Catalysis depends on charge relay system residues T40 and H43. Zn(2+) is bound by residues H63, E64, C93, C96, C99, and C107. NAD(+) contacts are provided by residues I175, D195, R200, L262–I264, and I286–Y287.

This sequence belongs to the zinc-containing alcohol dehydrogenase family. As to quaternary structure, homotetramer. Zn(2+) serves as cofactor.

It is found in the cytoplasm. It catalyses the reaction L-threonine + NAD(+) = (2S)-2-amino-3-oxobutanoate + NADH + H(+). It functions in the pathway amino-acid degradation; L-threonine degradation via oxydo-reductase pathway; glycine from L-threonine: step 1/2. Catalyzes the NAD(+)-dependent oxidation of L-threonine to 2-amino-3-ketobutyrate. This Paraburkholderia xenovorans (strain LB400) protein is L-threonine 3-dehydrogenase.